A 43-amino-acid chain; its full sequence is Protein PsbN (43 aa).

The helical transmembrane segment at 5–27 (TLVAISISCLLVSFTGYALYTAF) threads the bilayer.

Belongs to the PsbN family.

The protein resides in the plastid. The protein localises to the chloroplast thylakoid membrane. Functionally, may play a role in photosystem I and II biogenesis. This chain is Protein PsbN, found in Cedrus deodara (Deodar cedar).